Consider the following 209-residue polypeptide: Urease accessory protein UreG (209 aa).

11-18 (GPVGSGKT) is a GTP binding site.

Belongs to the SIMIBI class G3E GTPase family. UreG subfamily. In terms of assembly, homodimer. UreD, UreF and UreG form a complex that acts as a GTP-hydrolysis-dependent molecular chaperone, activating the urease apoprotein by helping to assemble the nickel containing metallocenter of UreC. The UreE protein probably delivers the nickel.

The protein resides in the cytoplasm. Facilitates the functional incorporation of the urease nickel metallocenter. This process requires GTP hydrolysis, probably effectuated by UreG. This Edwardsiella ictaluri (strain 93-146) protein is Urease accessory protein UreG.